Reading from the N-terminus, the 784-residue chain is Toll-like receptor 2 (784 aa).

Residues 1–18 (MPHTLWMVWVLGVIISLS) form the signal peptide. The Extracellular portion of the chain corresponds to 19–587 (KEESSNQASL…VRLSVSECHR (569 aa)). A disulfide bond links C30 and C36. LRR repeat units lie at residues 54–77 (VKSL…RYVN), 78–101 (LQAL…SLGR), 102–125 (LEHL…PLSS), 126–150 (LKFL…HLTK), 151–175 (LRIL…GLTF), 176–199 (LEEL…SIQN), 200–223 (VSHL…LTSS), 224–250 (VECL…TNSL), 251–278 (IKKF…QISG), 279–308 (LLEL…DPGK), 309–337 (VETV…LTER), 338–361 (VKRI…HLKS), 362–388 (LEYL…AWPS), 389–414 (LQTL…TLKN), 415–437 (LTNL…WPEK), 438–457 (MKYL…CIPK), 458–478 (TLEI…NLPQ), 479–500 (LKEL…LLPM), and 501–524 (LLVL…SFHT). N-linked (GlcNAc...) asparagine glycosylation occurs at N114. Residue N199 is glycosylated (N-linked (GlcNAc...) asparagine). An intrachain disulfide couples C353 to C382. An N-linked (GlcNAc...) asparagine glycan is attached at N414. A disulfide bond links C432 and C454. N-linked (GlcNAc...) asparagine glycosylation is present at N442. Residues 525–579 (LKTLEAGGNNFICSCEFLSFTQEQQALAKVLVDWPANYLCDSPSHVRGQRVQDVR) enclose the LRRCT domain. The helical transmembrane segment at 588 to 608 (AALVSGMCCALFLLILLMGVL) threads the bilayer. Residues 609-784 (CHRFHGLWYM…WVNLRAAIKS (176 aa)) are Cytoplasmic-facing. The 144-residue stretch at 639 to 782 (ICYDAFVSYS…GFWVNLRAAI (144 aa)) folds into the TIR domain. A Glycyl lysine isopeptide (Lys-Gly) (interchain with G-Cter in ubiquitin) cross-link involves residue K754. An ATG16L1-binding motif motif is present at residues 761 to 778 (YLEWPMDEARQEGFWVNL).

The protein belongs to the Toll-like receptor family. Interacts with LY96, TLR1 and TLR6 (via extracellular domain). TLR2 seems to exist in heterodimers with either TLR1 or TLR6 before stimulation by the ligand. The heterodimers form bigger oligomers in response to their corresponding ligands as well as further heterotypic associations with other receptors such as CD14 and/or CD36. Binds MYD88 (via TIR domain). Interacts with TICAM1. Interacts with CNPY3. Interacts with ATG16L1. Interacts with PPP1R11. Interacts with TICAM2. Interacts with TIRAP. In terms of processing, ubiquitinated at Lys-754 by PPP1R11, leading to its degradation. Deubiquitinated by USP2. Post-translationally, glycosylation of Asn-442 is critical for secretion of the N-terminal ectodomain of TLR2.

It localises to the membrane. The protein localises to the cytoplasmic vesicle. It is found in the phagosome membrane. The protein resides in the membrane raft. In terms of biological role, cooperates with LY96 to mediate the innate immune response to bacterial lipoproteins and other microbial cell wall components. Cooperates with TLR1 or TLR6 to mediate the innate immune response to bacterial lipoproteins or lipopeptides. Acts via MYD88 and TRAF6, leading to NF-kappa-B activation, cytokine secretion and the inflammatory response. May also promote apoptosis in response to lipoproteins. Forms activation clusters composed of several receptors depending on the ligand, these clusters trigger signaling from the cell surface and subsequently are targeted to the Golgi in a lipid-raft dependent pathway. Forms the cluster TLR2:TLR6:CD14:CD36 in response to diacylated lipopeptides and TLR2:TLR1:CD14 in response to triacylated lipopeptides. This Macaca fascicularis (Crab-eating macaque) protein is Toll-like receptor 2 (TLR2).